The primary structure comprises 318 residues: Aspartate carbamoyltransferase catalytic subunit (318 aa).

Carbamoyl phosphate contacts are provided by R59 and T60. K87 serves as a coordination point for L-aspartate. Carbamoyl phosphate is bound by residues R109, H137, and Q140. L-aspartate is bound by residues R170 and R224. 2 residues coordinate carbamoyl phosphate: G265 and P266.

Belongs to the aspartate/ornithine carbamoyltransferase superfamily. ATCase family. Heterododecamer (2C3:3R2) of six catalytic PyrB chains organized as two trimers (C3), and six regulatory PyrI chains organized as three dimers (R2).

It catalyses the reaction carbamoyl phosphate + L-aspartate = N-carbamoyl-L-aspartate + phosphate + H(+). It participates in pyrimidine metabolism; UMP biosynthesis via de novo pathway; (S)-dihydroorotate from bicarbonate: step 2/3. Its function is as follows. Catalyzes the condensation of carbamoyl phosphate and aspartate to form carbamoyl aspartate and inorganic phosphate, the committed step in the de novo pyrimidine nucleotide biosynthesis pathway. The sequence is that of Aspartate carbamoyltransferase catalytic subunit from Rhizobium rhizogenes (strain K84 / ATCC BAA-868) (Agrobacterium radiobacter).